Reading from the N-terminus, the 1227-residue chain is Methionine synthase (1227 aa).

Positions 2–325 (SSKVEQLRAQ…QHIAAMSRAV (324 aa)) constitute a Hcy-binding domain. Residues Cys247, Cys310, and Cys311 each contribute to the Zn(2+) site. The region spanning 356-617 (FVNVGERTNV…LPAELRDAVE (262 aa)) is the Pterin-binding domain. The region spanning 650-744 (QQAEWRSWEV…FIEASKEQGK (95 aa)) is the B12-binding N-terminal domain. Residues Glu694, 756 to 760 (GDVHD), His759, Ser804, Thr808, and Ala860 each bind methylcob(III)alamin. A B12-binding domain is found at 746–881 (NGKMVIATVK…SDTQRDDFVA (136 aa)). One can recognise an AdoMet activation domain in the interval 897-1227 (KKPRTPPVTL…LAPNLGYDAD (331 aa)). S-adenosyl-L-methionine-binding positions include Asp946, Arg1134, and 1189-1190 (YY).

It belongs to the vitamin-B12 dependent methionine synthase family. The cofactor is methylcob(III)alamin. Zn(2+) is required as a cofactor.

It carries out the reaction (6S)-5-methyl-5,6,7,8-tetrahydrofolate + L-homocysteine = (6S)-5,6,7,8-tetrahydrofolate + L-methionine. It participates in amino-acid biosynthesis; L-methionine biosynthesis via de novo pathway; L-methionine from L-homocysteine (MetH route): step 1/1. Catalyzes the transfer of a methyl group from methyl-cobalamin to homocysteine, yielding enzyme-bound cob(I)alamin and methionine. Subsequently, remethylates the cofactor using methyltetrahydrofolate. In Escherichia coli (strain K12), this protein is Methionine synthase (metH).